A 206-amino-acid chain; its full sequence is Small ribosomal subunit protein uS4 (206 aa).

The interval 15–46 (MGENIWGRPKSPVNKREYGPGQHGQRRKNKLS) is disordered. The S4 RNA-binding domain occupies 94 to 154 (RRLDAIVYRA…EKSRQLALVL (61 aa)).

Belongs to the universal ribosomal protein uS4 family. In terms of assembly, part of the 30S ribosomal subunit. Contacts protein S5. The interaction surface between S4 and S5 is involved in control of translational fidelity.

One of the primary rRNA binding proteins, it binds directly to 16S rRNA where it nucleates assembly of the body of the 30S subunit. In terms of biological role, with S5 and S12 plays an important role in translational accuracy. The chain is Small ribosomal subunit protein uS4 from Cereibacter sphaeroides (strain ATCC 17029 / ATH 2.4.9) (Rhodobacter sphaeroides).